The primary structure comprises 31 residues: Conotoxin Cltx-2 (31 aa).

A 4-hydroxyproline mark is found at Pro-6 and Pro-31.

Post-translationally, contains 4 disulfide bonds. Expressed by the venom duct.

The protein resides in the secreted. In Californiconus californicus (California cone), this protein is Conotoxin Cltx-2.